Reading from the N-terminus, the 622-residue chain is Transcription factor SKN7 (622 aa).

Residues 1–12 (MSFSTINSNVNK) show a composition bias toward polar residues. The interval 1–29 (MSFSTINSNVNKTTGDSNNNTTENSSTAD) is disordered. The segment covering 13 to 27 (TTGDSNNNTTENSST) has biased composition (low complexity). The tract at residues 84 to 190 (ANEFVRKLFR…GLDNIKRKIP (107 aa)) is DNA-binding domain. The hydrophobic repeat HR-A/B stretch occupies residues 212 to 303 (TNPNNPSGSL…NNFNTLCSTL (92 aa)). Positions 240 to 260 (FGNLRRRVDKLQKELDMSKME) form a coiled coil. The 115-residue stretch at 378 to 492 (HVLLVEDDAV…DLHSILIRYL (115 aa)) folds into the Response regulatory domain. Asp-427 is subject to 4-aspartylphosphate. 2 disordered regions span residues 501–579 (QQLP…QHHN) and 599–622 (TVPHSSMGSTPQLPQSTLQENQLS). The segment covering 512–527 (THSNTNTANSNPNTIN) has biased composition (low complexity). A compositionally biased stretch (polar residues) spans 537-554 (DNPSTTTPVTPGASISSA). Positions 555 to 578 (QHVQQGQQEQQHQIFHAQQQQQHH) are enriched in low complexity. A compositionally biased stretch (polar residues) spans 600–622 (VPHSSMGSTPQLPQSTLQENQLS).

The protein belongs to the SKN7 family. Homotrimer. The phosphorelay mechanism involves the sequential transfer of a phosphate group from 'His-576' (H1) to 'Asp-1144' (D1) of SLN1, then to 'His-64' (H2) of YPD1 and finally to Asp-427 (D2) of SKN7.

Its subcellular location is the nucleus. In terms of biological role, transcription factor that is part of a SLN1-YPD1-SKN7 two-component regulatory system, which controls gene expression in response to changes in the osmolarity of the extracellular environment. Under low osmotic conditions, phosphorylated and activated by the phosphorelay intermediate protein YPD1. Also activated in response to oxidative stress, independent on the two-component regulatory system. Regulates heat shock genes in response to oxidative stress and genes involved in cell wall integrity in response to osmotic changes. This Saccharomyces cerevisiae (strain ATCC 204508 / S288c) (Baker's yeast) protein is Transcription factor SKN7 (SKN7).